We begin with the raw amino-acid sequence, 329 residues long: Cytosolic sulfotransferase 6 (329 aa).

Position 74–79 (74–79) interacts with 3'-phosphoadenylyl sulfate; that stretch reads KCGTTW. The Proton acceptor role is filled by His140. 3'-phosphoadenylyl sulfate-binding positions include Arg162, Ser170, and 295-297; that span reads RKG.

The protein belongs to the sulfotransferase 1 family.

Its subcellular location is the cytoplasm. Functionally, sulfotransferase that utilizes 3'-phospho-5'-adenylyl sulfate (PAPS) as sulfonate donor. The protein is Cytosolic sulfotransferase 6 (SOT6) of Arabidopsis thaliana (Mouse-ear cress).